We begin with the raw amino-acid sequence, 269 residues long: Phosphatidate cytidylyltransferase (269 aa).

The next 8 helical transmembrane spans lie at 13–33 (LAAI…TILI), 50–70 (LKLV…FLLP), 81–101 (ISKM…TVLV), 110–130 (VGFI…FIEI), 138–158 (LTYI…AYFV), 180–200 (FAGG…VAQL), 201–221 (PIPY…GQLG), and 247–267 (ILDR…LLAL).

Belongs to the CDS family.

The protein resides in the cell membrane. It catalyses the reaction a 1,2-diacyl-sn-glycero-3-phosphate + CTP + H(+) = a CDP-1,2-diacyl-sn-glycerol + diphosphate. Its pathway is phospholipid metabolism; CDP-diacylglycerol biosynthesis; CDP-diacylglycerol from sn-glycerol 3-phosphate: step 3/3. The sequence is that of Phosphatidate cytidylyltransferase (cdsA) from Bacillus subtilis (strain 168).